We begin with the raw amino-acid sequence, 472 residues long: Alanine--anticapsin ligase (472 aa).

Residue Glu109 coordinates Mg(2+). ATP contacts are provided by Lys138 and Lys178. In terms of domain architecture, ATP-grasp spans 142-355 (RDAFNKAGVK…MAQLLLDVLC (214 aa)). Leu182 serves as a coordination point for Mg(2+). Residues 184-185 (SS), 226-229 (EEFL), and Gln268 each bind ATP. Substrate is bound by residues Glu273 and 309-311 (HTE). Residues Glu311 and Glu324 each coordinate Mg(2+). 328–331 (RFAG) lines the substrate pocket.

Monomer or homodimer. Mg(2+) is required as a cofactor.

It catalyses the reaction L-anticapsin + L-alanine + ATP = bacilysin + ADP + phosphate + H(+). Its pathway is antibiotic biosynthesis; bacilysin biosynthesis. Its function is as follows. Part of the bacABCDEFG operon responsible for the biosynthesis of bacilysin, an irreversible inactivator of the glutaminase domain of glucosamine synthetase. Catalyzes the formation of alpha-dipeptides from various L-amino acids in the presence of ATP. In vivo catalyzes the ligation of L-alanine and L-anticapsin (epoxycyclohexanonyl-Ala) to produce the final bacilysin antibiotic (L-Ala-L-4S-cyclohexenonyl-Ala dipeptide). The substrate specificity is restricted to small amino acids such as L-Ala, for the N-terminal end of the dipeptide, whereas a wide range of hydrophobic amino acids such as L-Phe, L-Tyr and L-Met are recognized for the C-terminal end. This is Alanine--anticapsin ligase from Bacillus subtilis (strain 168).